We begin with the raw amino-acid sequence, 274 residues long: Dermonecrotic toxin SdSicTox-betaIIB1bi (274 aa).

The active site involves histidine 5. Mg(2+) contacts are provided by glutamate 25 and aspartate 27. The active-site Nucleophile is histidine 41. Disulfide bonds link cysteine 45–cysteine 51 and cysteine 47–cysteine 190. Residue aspartate 85 participates in Mg(2+) binding.

This sequence belongs to the arthropod phospholipase D family. Class II subfamily. Requires Mg(2+) as cofactor. In terms of tissue distribution, expressed by the venom gland.

It localises to the secreted. It catalyses the reaction an N-(acyl)-sphingosylphosphocholine = an N-(acyl)-sphingosyl-1,3-cyclic phosphate + choline. The enzyme catalyses an N-(acyl)-sphingosylphosphoethanolamine = an N-(acyl)-sphingosyl-1,3-cyclic phosphate + ethanolamine. It carries out the reaction a 1-acyl-sn-glycero-3-phosphocholine = a 1-acyl-sn-glycero-2,3-cyclic phosphate + choline. The catalysed reaction is a 1-acyl-sn-glycero-3-phosphoethanolamine = a 1-acyl-sn-glycero-2,3-cyclic phosphate + ethanolamine. In terms of biological role, dermonecrotic toxins cleave the phosphodiester linkage between the phosphate and headgroup of certain phospholipids (sphingolipid and lysolipid substrates), forming an alcohol (often choline) and a cyclic phosphate. This toxin acts on sphingomyelin (SM). It may also act on ceramide phosphoethanolamine (CPE), lysophosphatidylcholine (LPC) and lysophosphatidylethanolamine (LPE), but not on lysophosphatidylserine (LPS), and lysophosphatidylglycerol (LPG). It acts by transphosphatidylation, releasing exclusively cyclic phosphate products as second products. Induces dermonecrosis, hemolysis, increased vascular permeability, edema, inflammatory response, and platelet aggregation. This Sicarius cf. damarensis (strain GJB-2008) (Six-eyed sand spider) protein is Dermonecrotic toxin SdSicTox-betaIIB1bi.